The following is a 355-amino-acid chain: Protein-tyrosine sulfotransferase 1 (355 aa).

Residues methionine 1 to asparagine 8 lie on the Cytoplasmic side of the membrane. The chain crosses the membrane as a helical; Signal-anchor for type II membrane protein span at residues leucine 9 to cysteine 25. Over arginine 26 to serine 355 the chain is Lumenal. Residue asparagine 55 is glycosylated (N-linked (GlcNAc...) asparagine). Arginine 76–threonine 80 contributes to the 3'-phosphoadenylyl sulfate binding site. Cysteine 94 and cysteine 154 are joined by a disulfide. Catalysis depends on glutamate 97, which acts as the Proton donor/acceptor. An interaction with peptide substrate region spans residues arginine 99–arginine 103. Arginine 181, serine 189, and arginine 193 together coordinate 3'-phosphoadenylyl sulfate. A disulfide bridge connects residues cysteine 223 and cysteine 230. 3'-phosphoadenylyl sulfate is bound by residues tyrosine 235, serine 282–asparagine 291, and lysine 297. Positions histidine 325–serine 355 are disordered. Basic and acidic residues predominate over residues asparagine 341–serine 355.

It belongs to the protein sulfotransferase family.

The protein resides in the golgi apparatus membrane. The catalysed reaction is L-tyrosyl-[protein] + 3'-phosphoadenylyl sulfate = O-sulfo-L-tyrosine-[protein] + adenosine 3',5'-bisphosphate + H(+). Functionally, catalyzes the O-sulfation of tyrosine residues within acidic motifs of polypeptides, using 3'-phosphoadenylyl sulfate (PAPS) as cosubstrate. The chain is Protein-tyrosine sulfotransferase 1 (tpst1) from Danio rerio (Zebrafish).